The chain runs to 489 residues: Tandem C2 domains nuclear protein (489 aa).

Ser82, Ser155, Ser167, Ser173, and Ser210 each carry phosphoserine. Positions 189–214 are disordered; sequence DSFSSVPSSSSSRKNSQGSNRSLDTI. Over residues 191 to 210 the composition is skewed to low complexity; the sequence is FSSVPSSSSSRKNSQGSNRS. Phosphothreonine is present on residues Thr213 and Thr215. Phosphoserine is present on Ser217. 2 C2 domains span residues 222-341 and 343-470; these read DLGR…SLEI and APSK…NQWK. The Nuclear localization signal signature appears at 446 to 448; that stretch reads RRK.

The protein localises to the nucleus. The protein is Tandem C2 domains nuclear protein (Tc2n) of Mus musculus (Mouse).